Reading from the N-terminus, the 91-residue chain is Protein RacC (91 aa).

The sequence is that of Protein RacC (racC) from Escherichia coli (strain K12).